Reading from the N-terminus, the 310-residue chain is Imidazolonepropionase (310 aa).

Positions 42 and 75 each coordinate 4-imidazolone-5-propanoate. Tyr42 lines the N-formimidoyl-L-glutamate pocket. Residue His140 participates in Fe(3+) binding. His140 contributes to the Zn(2+) binding site. Position 143 (Glu143) interacts with 4-imidazolone-5-propanoate. A Fe(3+)-binding site is contributed by Asp215. A Zn(2+)-binding site is contributed by Asp215. N-formimidoyl-L-glutamate-binding residues include Asn217 and Gly219. 4-imidazolone-5-propanoate is bound at residue Ser220.

The protein belongs to the metallo-dependent hydrolases superfamily. HutI family. It depends on Zn(2+) as a cofactor. Requires Fe(3+) as cofactor.

Its subcellular location is the cytoplasm. It catalyses the reaction 4-imidazolone-5-propanoate + H2O = N-formimidoyl-L-glutamate. It functions in the pathway amino-acid degradation; L-histidine degradation into L-glutamate; N-formimidoyl-L-glutamate from L-histidine: step 3/3. In terms of biological role, catalyzes the hydrolytic cleavage of the carbon-nitrogen bond in imidazolone-5-propanoate to yield N-formimidoyl-L-glutamate. It is the third step in the universal histidine degradation pathway. In Streptococcus gordonii, this protein is Imidazolonepropionase (hutI).